The chain runs to 135 residues: NNCPHDWLPMNGLCYKIFDELKAWEDAERFCRKYKPGCHLASFHTYGESLEIAEYISDYHKGQAEVWIGLWDKKKDFSWEWTDRSCTDYLTWDKNQPDVYQNKEFCVELVSLTGYRLWNDQVCESKNAFLCQCKF.

Intrachain disulfides connect Cys3/Cys14, Cys31/Cys131, Cys38/Cys133, and Cys106/Cys123. Residues 10-132 (MNGLCYKIFD…CESKNAFLCQ (123 aa)) form the C-type lectin domain. Ca(2+)-binding residues include Gln96, Asp98, Glu104, Asn119, and Asp120. Residues 96-98 (QPD) carry the Galactose-binding motif.

This sequence belongs to the true venom lectin family. As to quaternary structure, homodimer; disulfide-linked. In terms of tissue distribution, expressed by the venom gland.

Its subcellular location is the secreted. Its function is as follows. Beta-galactoside lectin that agglutinates rabbit and human erythrocytes in a calcium-dependent fashion (MHC is 0.21 ug/ml on rabbit erythrocytes). Galactose (15 mM), lactose (20 mM), rhamnose (20 mM) and EGTA strongly inhibit this activity. This Agkistrodon piscivorus piscivorus (Eastern cottonmouth) protein is C-type lectin APL.